A 236-amino-acid polypeptide reads, in one-letter code: Rho-related GTP-binding protein RhoV (236 aa).

Residues 1–27 (MPPRELSEAEPPPLRAPTPPPRRRSAP) are disordered. Pro residues predominate over residues 10-20 (EPPPLRAPTPP). Serine 25 is subject to Phosphoserine. GTP-binding positions include 38–45 (GDGAVGKS), 85–89 (DTAGQ), and 143–146 (TQAD). A lipid anchor (S-palmitoyl cysteine) is attached at cysteine 234.

Belongs to the small GTPase superfamily. Rho family. As to quaternary structure, interacts with PAK2. Requires Mg(2+) as cofactor. Highly expressed in pancreas, placenta, and fetal brain.

It localises to the cell membrane. It is found in the endosome membrane. Its function is as follows. Plays a role in the control of the actin cytoskeleton via activation of the JNK pathway. This chain is Rho-related GTP-binding protein RhoV, found in Homo sapiens (Human).